Reading from the N-terminus, the 411-residue chain is Lysosome-associated membrane glycoprotein 3 (411 aa).

The signal sequence occupies residues 1–21; that stretch reads MPGQISAVAVLFLSLTVILHG. Residues 22–376 are Lumenal-facing; that stretch reads YQIREKEFPK…NVNECLSDYT (355 aa). Over residues 172-192 the composition is skewed to polar residues; sequence HKSTTNQRPTLSTNVLGTSTP. The interval 172 to 204 is disordered; the sequence is HKSTTNQRPTLSTNVLGTSTPTHKDRSTTSPVP. N227 is a glycosylation site (N-linked (GlcNAc...) asparagine). 2 disulfides stabilise this stretch: C232/C269 and C334/C371. Residues 377 to 397 traverse the membrane as a helical segment; the sequence is VVLPMVAIIVVVICVVGLSVY. At 398-411 the chain is on the cytoplasmic side; that stretch reads KIRQRHQSSAYQRI.

It belongs to the LAMP family. As to quaternary structure, monomer. Interacts with FURIN.

Its subcellular location is the cell surface. The protein localises to the lysosome membrane. It is found in the cytoplasmic vesicle membrane. The protein resides in the early endosome membrane. In terms of biological role, lysosomal membrane glycoprotein which plays a role in the unfolded protein response (UPR) that contributes to protein degradation and cell survival during proteasomal dysfunction. Plays a role in the process of fusion of the lysosome with the autophagosome, thereby modulating the autophagic process. Promotes hepatocellular lipogenesis through activation of the PI3K/Akt pathway. May also play a role in dendritic cell function and in adaptive immunity. This chain is Lysosome-associated membrane glycoprotein 3 (Lamp3), found in Mus musculus (Mouse).